Here is a 404-residue protein sequence, read N- to C-terminus: Serine/threonine transporter SstT (404 aa).

The next 8 membrane-spanning stretches (helical) occupy residues 17-37 (IGIGVVIGVMLGILAPDLTGF), 39-59 (ILGKLFVGGLKAIAPLLVFAL), 75-95 (MTLIIFLYLFGTFASALVAVL), 138-158 (ALATANYIGVLSWAIIFGLAL), 179-199 (IVVWIINLAPIGIMSLVFTTI), 212-232 (FLILVLVGTMVFVALVVNPLI), 287-307 (IPLGATINMGGAAITINVLTL), and 313-333 (FGIPIDFLTALLLSVVAAVSA).

It belongs to the dicarboxylate/amino acid:cation symporter (DAACS) (TC 2.A.23) family.

It is found in the cell membrane. It carries out the reaction L-serine(in) + Na(+)(in) = L-serine(out) + Na(+)(out). The catalysed reaction is L-threonine(in) + Na(+)(in) = L-threonine(out) + Na(+)(out). Functionally, involved in the import of serine and threonine into the cell, with the concomitant import of sodium (symport system). The sequence is that of Serine/threonine transporter SstT from Streptococcus pyogenes serotype M5 (strain Manfredo).